The following is a 403-amino-acid chain: F-box/LRR-repeat protein At1g06630 (403 aa).

The 49-residue stretch at 11 to 59 (RDAINWLPDEILGKILSLLATKQAVSTSVLSKKWRTLFKLVDTLEFDDS) folds into the F-box domain. LRR repeat units follow at residues 239–262 (LPNLEYLDYSDYALYGYPQVNLES) and 288–312 (IRNVEILSLSPDSVGVIYSCCKYGL).

In Arabidopsis thaliana (Mouse-ear cress), this protein is F-box/LRR-repeat protein At1g06630.